A 389-amino-acid chain; its full sequence is Probable L-tyrosine/L-aspartate decarboxylase (389 aa).

Lysine 233 is subject to N6-(pyridoxal phosphate)lysine.

This sequence belongs to the group II decarboxylase family. MfnA subfamily. Requires pyridoxal 5'-phosphate as cofactor.

The catalysed reaction is L-tyrosine + H(+) = tyramine + CO2. The enzyme catalyses L-aspartate + H(+) = beta-alanine + CO2. Its pathway is cofactor biosynthesis; methanofuran biosynthesis. The protein operates within cofactor biosynthesis; coenzyme A biosynthesis. Functionally, catalyzes the decarboxylation of L-tyrosine to produce tyramine for methanofuran biosynthesis. Can also catalyze the decarboxylation of L-aspartate to produce beta-alanine for coenzyme A (CoA) biosynthesis. This Methanosphaera stadtmanae (strain ATCC 43021 / DSM 3091 / JCM 11832 / MCB-3) protein is Probable L-tyrosine/L-aspartate decarboxylase.